A 226-amino-acid polypeptide reads, in one-letter code: ATP synthase F(0) complex subunit a (226 aa).

A run of 6 helical transmembrane segments spans residues 6-26 (FAPF…IITF), 68-88 (WTLM…LGLL), 97-117 (QLSM…IMGF), 138-158 (IPML…ALAV), 164-184 (ITAG…LSSI), and 195-215 (ILFL…YVFT).

This sequence belongs to the ATPase A chain family. Component of the ATP synthase complex composed at least of ATP5F1A/subunit alpha, ATP5F1B/subunit beta, ATP5MC1/subunit c (homooctomer), MT-ATP6/subunit a, MT-ATP8/subunit 8, ATP5ME/subunit e, ATP5MF/subunit f, ATP5MG/subunit g, ATP5MK/subunit k, ATP5MJ/subunit j, ATP5F1C/subunit gamma, ATP5F1D/subunit delta, ATP5F1E/subunit epsilon, ATP5PF/subunit F6, ATP5PB/subunit b, ATP5PD/subunit d, ATP5PO/subunit OSCP. ATP synthase complex consists of a soluble F(1) head domain (subunits alpha(3) and beta(3)) - the catalytic core - and a membrane F(0) domain - the membrane proton channel (subunits c, a, 8, e, f, g, k and j). These two domains are linked by a central stalk (subunits gamma, delta, and epsilon) rotating inside the F1 region and a stationary peripheral stalk (subunits F6, b, d, and OSCP). Interacts with DNAJC30; interaction is direct.

Its subcellular location is the mitochondrion inner membrane. The enzyme catalyses H(+)(in) = H(+)(out). In terms of biological role, subunit a, of the mitochondrial membrane ATP synthase complex (F(1)F(0) ATP synthase or Complex V) that produces ATP from ADP in the presence of a proton gradient across the membrane which is generated by electron transport complexes of the respiratory chain. ATP synthase complex consist of a soluble F(1) head domain - the catalytic core - and a membrane F(1) domain - the membrane proton channel. These two domains are linked by a central stalk rotating inside the F(1) region and a stationary peripheral stalk. During catalysis, ATP synthesis in the catalytic domain of F(1) is coupled via a rotary mechanism of the central stalk subunits to proton translocation. With the subunit c (ATP5MC1), forms the proton-conducting channel in the F(0) domain, that contains two crucial half-channels (inlet and outlet) that facilitate proton movement from the mitochondrial intermembrane space (IMS) into the matrix. Protons are taken up via the inlet half-channel and released through the outlet half-channel, following a Grotthuss mechanism. The polypeptide is ATP synthase F(0) complex subunit a (Didelphis virginiana (North American opossum)).